A 130-amino-acid chain; its full sequence is Small ribosomal subunit protein uS9 (130 aa).

It belongs to the universal ribosomal protein uS9 family.

The protein is Small ribosomal subunit protein uS9 of Cupriavidus metallidurans (strain ATCC 43123 / DSM 2839 / NBRC 102507 / CH34) (Ralstonia metallidurans).